A 225-amino-acid chain; its full sequence is MKKFFIIGTDTEVGKTYISTKLIEVCEHQNIKSLCLKPVASGQSQFSELCEDVESILNAYKHKFTAAEINLISFNQAVAPHIIAAKTKVDISIENLKQFIEDKYNQDLDILFIEGAGGLLTPYSDHTTQLDLIKALQIPVLLVSAIKVGCINHTLLTINELNRHNIKLAGWIANCNDSNIKYIDEQINTIEELSGYKCSAKISRNADYLDFIDLSKILISPEENE.

Position 12 to 17 (12 to 17) interacts with ATP; the sequence is EVGKTY. Thr16 lines the Mg(2+) pocket. Lys37 is an active-site residue. A substrate-binding site is contributed by Ser41. ATP is bound by residues Asp52, 114–117, and 174–175; these read EGAG and NC. Mg(2+) contacts are provided by Asp52 and Glu114.

This sequence belongs to the dethiobiotin synthetase family. As to quaternary structure, homodimer. Mg(2+) is required as a cofactor.

Its subcellular location is the cytoplasm. The catalysed reaction is (7R,8S)-7,8-diammoniononanoate + CO2 + ATP = (4R,5S)-dethiobiotin + ADP + phosphate + 3 H(+). It participates in cofactor biosynthesis; biotin biosynthesis; biotin from 7,8-diaminononanoate: step 1/2. In terms of biological role, catalyzes a mechanistically unusual reaction, the ATP-dependent insertion of CO2 between the N7 and N8 nitrogen atoms of 7,8-diaminopelargonic acid (DAPA, also called 7,8-diammoniononanoate) to form a ureido ring. This Francisella tularensis subsp. mediasiatica (strain FSC147) protein is ATP-dependent dethiobiotin synthetase BioD.